Here is a 382-residue protein sequence, read N- to C-terminus: Flap endonuclease 1-B (382 aa).

The N-domain stretch occupies residues 1–104 (MGIHGLAKLI…GELAKRSERR (104 aa)). Residue D34 coordinates Mg(2+). The DNA site is built by R47 and R70. Residues D86, E158, E160, D179, and D181 each coordinate Mg(2+). Positions 122–253 (NIEKFNKRLV…KRAIDLIRQH (132 aa)) are I-domain. Residue E158 coordinates DNA. Positions 231 and 233 each coordinate DNA. Residue D233 participates in Mg(2+) binding. The interaction with PCNA stretch occupies residues 336-344 (TQGRLDDFF). Residues 352 to 382 (STKRKEVESKGSTKKKSKTGGTPAGKFKRGK) are disordered.

It belongs to the XPG/RAD2 endonuclease family. FEN1 subfamily. In terms of assembly, interacts with PCNA. Three molecules of fen1 bind to one PCNA trimer with each molecule binding to one PCNA monomer. PCNA stimulates the nuclease activity without altering cleavage specificity. The cofactor is Mg(2+). In terms of processing, phosphorylated. Phosphorylation upon DNA damage induces relocalization to the nuclear plasma.

It localises to the nucleus. The protein resides in the nucleolus. The protein localises to the nucleoplasm. It is found in the mitochondrion. Functionally, structure-specific nuclease with 5'-flap endonuclease and 5'-3' exonuclease activities involved in DNA replication and repair. During DNA replication, cleaves the 5'-overhanging flap structure that is generated by displacement synthesis when DNA polymerase encounters the 5'-end of a downstream Okazaki fragment. It enters the flap from the 5'-end and then tracks to cleave the flap base, leaving a nick for ligation. Also involved in the long patch base excision repair (LP-BER) pathway, by cleaving within the apurinic/apyrimidinic (AP) site-terminated flap. Acts as a genome stabilization factor that prevents flaps from equilibrating into structures that lead to duplications and deletions. Also possesses 5'-3' exonuclease activity on nicked or gapped double-stranded DNA, and exhibits RNase H activity. Also involved in replication and repair of rDNA and in repairing mitochondrial DNA. The sequence is that of Flap endonuclease 1-B (fen1-b) from Xenopus laevis (African clawed frog).